Here is a 119-residue protein sequence, read N- to C-terminus: Amicyanin-alpha (119 aa).

The first 20 residues, 1 to 20 (MRALAFAAALAAFSATAALA), serve as a signal peptide directing secretion. The Plastocyanin-like domain maps to 21–119 (AGALEAVQEA…PFMKGKVVVE (99 aa)). Cu cation contacts are provided by histidine 67, cysteine 106, histidine 109, and methionine 112.

Cu cation is required as a cofactor.

Its subcellular location is the periplasm. It functions in the pathway one-carbon metabolism; methylamine degradation. Primary acceptor of electrons from methylamine dehydrogenase. Passes those electrons on either a soluble cytochrome c or to pseudoazurin. The protein is Amicyanin-alpha (mauC) of Methylorubrum extorquens (strain ATCC 14718 / DSM 1338 / JCM 2805 / NCIMB 9133 / AM1) (Methylobacterium extorquens).